The following is a 347-amino-acid chain: FK506-binding protein-like (347 aa).

Positions 1 to 36 (METSLISPMKENNTAQPQQREENTQQNLNAAVPIKQ) are disordered. Residue Thr3 is modified to Phosphothreonine. TPR repeat units follow at residues 208 to 241 (AKEEHRRGTELFRAGNPQGAARCYGRALRLLLTL), 250 to 283 (TILHANLAACQLLLGHPQLAAQSCDRVLEREPGH), and 284 to 317 (LKALYRRGVAQAALGDLDKATADLKKVLAVDPKN).

Forms a ternary complex with CDKN1A/p21 and HSP90AB1/Hsp90.

Functionally, may be involved in response to X-ray. Regulates p21 protein stability by binding to Hsp90 and p21. In Rattus norvegicus (Rat), this protein is FK506-binding protein-like (Fkbpl).